A 315-amino-acid chain; its full sequence is Glutathione synthetase (315 aa).

In terms of domain architecture, ATP-grasp spans 125–310; it reads KLFTAWFSDL…ITGMLMDAIE (186 aa). An ATP-binding site is contributed by 151–207; sequence WEKHSDIILKPLDGMGGASIFRVKEGDPNLGVIAETLTEHGTRYCMAQNYLPAIKDG. Mg(2+) is bound by residues E281 and N283.

This sequence belongs to the prokaryotic GSH synthase family. Requires Mg(2+) as cofactor. Mn(2+) serves as cofactor.

It catalyses the reaction gamma-L-glutamyl-L-cysteine + glycine + ATP = glutathione + ADP + phosphate + H(+). It participates in sulfur metabolism; glutathione biosynthesis; glutathione from L-cysteine and L-glutamate: step 2/2. The chain is Glutathione synthetase from Escherichia coli O157:H7.